We begin with the raw amino-acid sequence, 748 residues long: MAGSSGQQGKGRRVQPQWSPPAGTQPCRLHLYNSLTRNKEVFIPQDGKKVTWYCCGPTVYDASHMGHARSYISFDILRRVLKDYFKFDVFYCMNITDIDDKIIKRARQNHLFEQYLEKRPEAAQLLEDVQAALKPFSVKLNETTDPDKKQMLERIQHEVQLATEPLEKAVQSRLTGEEVNSCVEVLLEEAKDLLSDWLDSTLGSDVTDNSIFSKLPKFWEGEFHRDMEALNVLPPDVLTRVSEYVPEIVNFVQKIVDNGYGYVSDGSVYFDTAKFASSEKHSYGKLVPEAVGDQKALQEGEGDLSISADRLSEKRSPNDFALWKASKPGEPSWPCPWGKGRPGWHIECSAMAGTLLGASMDIHGGGFDLRFPHHDNELAQSEAYFENDCWVRYFLHTGHLTITGCKMSKSLKNFITIKDALKKHSARQLRLAFLMHSWKDTLDYSSNTMESALQYEKFLNEFFLNVKDILRAPVDITGQFEKWGEEEAELNKNFYDKKTAIHEALCDNVDTRTVMEEMRALVSQCNLYMAARKAMRKRPNRALLENIALYLTHMLKIFGAIEEESSLGFPVGGSGTSLNLESTVMPYLQVLSEFREGVRKIAREQKVPEVLQLSDALRDDILPELGVRFEDPEGLPTVVKLVDRNTLLKEREEKRQVEEEKRKKKEEAARRKQEQEAAKLAKMKIPPSEMFLSETDKYSKFDENGLPTHDAEGKELSKGQAKKVKKLFEAQEKLYKEYLQMPQNGSFQ.

Residues 1–25 (MAGSSGQQGKGRRVQPQWSPPAGTQ) are disordered. N-acetylalanine is present on Ala2. Phosphoserine is present on Ser19. Position 55 (Cys55) interacts with Zn(2+). Gly56 provides a ligand contact to L-cysteine. The short motif at 57–67 (PTVYDASHMGH) is the 'HIGH' region element. Residue Thr96 participates in L-cysteine binding. The short motif at 101-104 (KIIK) is the 'KIIK' region element. 2 positions are modified to phosphoserine: Ser305 and Ser307. Zn(2+)-binding residues include Cys348, His373, and Glu377. An L-cysteine-binding site is contributed by His373. The 'KMSKS' region signature appears at 406 to 410 (KMSKS). Lys409 is an ATP binding site. Composition is skewed to basic and acidic residues over residues 654–679 (KRQV…EAAK) and 700–717 (KFDE…KELS). 2 disordered regions span residues 654–686 (KRQV…MKIP) and 700–721 (KFDE…KGQA). Ser746 is modified (phosphoserine).

Homodimer. It depends on Zn(2+) as a cofactor.

The protein localises to the cytoplasm. The enzyme catalyses tRNA(Cys) + L-cysteine + ATP = L-cysteinyl-tRNA(Cys) + AMP + diphosphate. Its function is as follows. Catalyzes the ATP-dependent ligation of cysteine to tRNA(Cys). The sequence is that of Cysteine--tRNA ligase, cytoplasmic (CARS1) from Macaca fascicularis (Crab-eating macaque).